Consider the following 456-residue polypeptide: Gamma-aminobutyric acid receptor subunit alpha-1 (456 aa).

The N-terminal stretch at 1–27 is a signal peptide; it reads MKKSPGLSDYLWAWTLFLSTLTGRSYG. Residues 28 to 253 lie on the Extracellular side of the membrane; sequence QPSLQDELKD…FHLKRKIGYF (226 aa). Residue asparagine 38 is glycosylated (N-linked (GlcNAc...) asparagine). Arginine 94 is a binding site for 4-aminobutanoate. Asparagine 138 carries an N-linked (GlcNAc...) asparagine glycan. A 4-aminobutanoate-binding site is contributed by threonine 157. Cysteine 166 and cysteine 180 form a disulfide bridge. The chain crosses the membrane as a helical span at residues 254–274; it reads VIQTYLPCIMTVILSQVSFWL. The Cytoplasmic segment spans residues 275-279; sequence NRESV. A helical membrane pass occupies residues 280-301; it reads PARTVFGVTTVLTMTTLSISAR. Residues 302-311 lie on the Extracellular side of the membrane; sequence NSLPKVAYAT. Residues 312-333 traverse the membrane as a helical segment; the sequence is AMDWFIAVCYAFVFSALIEFAT. Over 334-421 the chain is Cytoplasmic; the sequence is VNYFTKRGYA…TFNSVSKIDR (88 aa). The chain crosses the membrane as a helical span at residues 422 to 441; the sequence is LSRIAFPLLFGIFNLVYWAT. Residues 442–456 lie on the Extracellular side of the membrane; sequence YLNREPQLKAPTPHQ.

The protein belongs to the ligand-gated ion channel (TC 1.A.9) family. Gamma-aminobutyric acid receptor (TC 1.A.9.5) subfamily. GABRA1 sub-subfamily. As to quaternary structure, heteropentamer, formed by a combination of alpha (GABRA1-6), beta (GABRB1-3), gamma (GABRG1-3), delta (GABRD), epsilon (GABRE), rho (GABRR1-3), pi (GABRP) and theta (GABRQ) subunits, each subunit exhibiting distinct physiological and pharmacological properties. Interacts with UBQLN1. Interacts with TRAK1. Interacts with KIF21B. Identified in a complex of 720 kDa composed of LHFPL4, NLGN2, GABRA1, GABRB2, GABRG2 and GABRB3. Interacts with LHFPL4. Interacts with NLGN2. Interacts with SHISA7; interaction leads to the regulation of GABA(A) receptor trafficking, channel deactivation kinetics and pharmacology. In terms of tissue distribution, cerebellar granule cells, Purkinje cells and stellate/basket cells.

The protein localises to the postsynaptic cell membrane. It is found in the cell membrane. Its subcellular location is the cytoplasmic vesicle membrane. The enzyme catalyses chloride(in) = chloride(out). Allosterically activated by benzodiazepines, the neuroanesthetic alphaxalone and pentobarbital. Inhibited by the antagonist bicuculline. Potentiated by histamine. In terms of biological role, alpha subunit of the heteropentameric ligand-gated chloride channel gated by gamma-aminobutyric acid (GABA), a major inhibitory neurotransmitter in the brain. GABA-gated chloride channels, also named GABA(A) receptors (GABAAR), consist of five subunits arranged around a central pore and contain GABA active binding site(s) located at the alpha and beta subunit interface(s). When activated by GABA, GABAARs selectively allow the flow of chloride anions across the cell membrane down their electrochemical gradient. Alpha-1/GABRA1-containing GABAARs are largely synaptic. Chloride influx into the postsynaptic neuron following GABAAR opening decreases the neuron ability to generate a new action potential, thereby reducing nerve transmission. GABAARs containing alpha-1 and beta-2 or -3 subunits exhibit synaptogenic activity; the gamma-2 subunit being necessary but not sufficient to induce rapid synaptic contacts formation. GABAARs function also as histamine receptor where histamine binds at the interface of two neighboring beta subunits and potentiates GABA response. GABAARs containing alpha, beta and epsilon subunits also permit spontaneous chloride channel activity while preserving the structural information required for GABA-gated openings. Alpha-1-mediated plasticity in the orbitofrontal cortex regulates context-dependent action selection. Together with rho subunits, may also control neuronal and glial GABAergic transmission in the cerebellum. The polypeptide is Gamma-aminobutyric acid receptor subunit alpha-1 (GABRA1) (Bos taurus (Bovine)).